Consider the following 443-residue polypeptide: Ribulose bisphosphate carboxylase large chain (443 aa).

Lys7 carries the post-translational modification N6,N6,N6-trimethyllysine. Substrate is bound by residues Asn116 and Thr166. Lys168 functions as the Proton acceptor in the catalytic mechanism. Lys170 is a binding site for substrate. Mg(2+)-binding residues include Lys194, Asp196, and Glu197. Lys194 is modified (N6-carboxylysine). His287 acts as the Proton acceptor in catalysis. 3 residues coordinate substrate: Arg288, His320, and Ser372.

It belongs to the RuBisCO large chain family. Type I subfamily. As to quaternary structure, heterohexadecamer of 8 large chains and 8 small chains; disulfide-linked. The disulfide link is formed within the large subunit homodimers. The cofactor is Mg(2+). Post-translationally, the disulfide bond which can form in the large chain dimeric partners within the hexadecamer appears to be associated with oxidative stress and protein turnover.

Its subcellular location is the plastid. It is found in the chloroplast. The catalysed reaction is 2 (2R)-3-phosphoglycerate + 2 H(+) = D-ribulose 1,5-bisphosphate + CO2 + H2O. The enzyme catalyses D-ribulose 1,5-bisphosphate + O2 = 2-phosphoglycolate + (2R)-3-phosphoglycerate + 2 H(+). In terms of biological role, ruBisCO catalyzes two reactions: the carboxylation of D-ribulose 1,5-bisphosphate, the primary event in carbon dioxide fixation, as well as the oxidative fragmentation of the pentose substrate in the photorespiration process. Both reactions occur simultaneously and in competition at the same active site. The sequence is that of Ribulose bisphosphate carboxylase large chain from Abies sachalinensis (Sakhalin fir).